The sequence spans 122 residues: Large ribosomal subunit protein uL14 (122 aa).

It belongs to the universal ribosomal protein uL14 family. In terms of assembly, part of the 50S ribosomal subunit. Forms a cluster with proteins L3 and L19. In the 70S ribosome, L14 and L19 interact and together make contacts with the 16S rRNA in bridges B5 and B8.

Binds to 23S rRNA. Forms part of two intersubunit bridges in the 70S ribosome. The chain is Large ribosomal subunit protein uL14 from Flavobacterium psychrophilum (strain ATCC 49511 / DSM 21280 / CIP 103535 / JIP02/86).